The primary structure comprises 180 residues: Translation machinery-associated protein 16 homolog (180 aa).

Residues 1 to 12 (MTNLRKELEKCK) are compositionally biased toward basic and acidic residues. Positions 1–32 (MTNLRKELEKCKHPNSRKTKALGKKARRQNNK) are disordered. The span at 13–32 (HPNSRKTKALGKKARRQNNK) shows a compositional bias: basic residues.

The protein belongs to the TMA16 family.

The chain is Translation machinery-associated protein 16 homolog from Drosophila melanogaster (Fruit fly).